Reading from the N-terminus, the 339-residue chain is DnaJ homolog subfamily C member 22 (339 aa).

In terms of domain architecture, TM2 spans 4–50 (GLLMTYVLWALGGPVGLHHLYLGRDSHALLWMLTLGGGGLGWLWEFW). The next 7 helical transmembrane spans lie at 5 to 25 (LLMT…HLYL), 30 to 50 (HALL…WEFW), 81 to 101 (FASQ…SLSS), 105 to 125 (FYIV…AAVG), 135 to 155 (LGAA…ILPI), 185 to 205 (VGLA…YNTA), and 218 to 238 (FLSW…VLLL). Positions 277–339 (LAHQVLGVPE…LSQPKKPRAS (63 aa)) constitute a J domain.

The protein localises to the membrane. Functionally, may function as a co-chaperone. The protein is DnaJ homolog subfamily C member 22 (Dnajc22) of Mus musculus (Mouse).